The chain runs to 215 residues: HTH-type transcriptional regulator for conjugative element R391 (215 aa).

Positions 8–61 (LNHALQLTGVTQSELARRIGIKQQSISQICSGKSARSRYTMQIAEALRVNAHWL) constitute an HTH cro/C1-type domain. Positions 19 to 38 (QSELARRIGIKQQSISQICS) form a DNA-binding region, H-T-H motif.

In terms of biological role, may control the expression of the integrase and inhibit excision of the mobile element R391, and regulate the expression of other genes as well. This Providencia rettgeri protein is HTH-type transcriptional regulator for conjugative element R391.